The following is a 1224-amino-acid chain: Coatomer subunit alpha (1224 aa).

WD repeat units follow at residues Thr-7 to Asp-37, Glu-49 to Asn-79, Gly-91 to Asn-121, and Gly-133 to Asp-163. Ser-173 is modified (phosphoserine). A Phosphothreonine modification is found at Thr-185. 2 WD repeats span residues Gly-203–Arg-233 and Gly-247–Asp-277. Phosphothreonine is present on Thr-591. Arg-965 carries the omega-N-methylarginine modification. Residue Ser-1193 is modified to Phosphoserine.

Oligomeric complex that consists of at least the alpha, beta, beta', gamma, delta, epsilon and zeta subunits. Interacts with SCYL1. Interacts with JAGN1. Interacts with TMEM41B. Interacts with SVEP1. Probably interacts with PEX11A.

It is found in the cytoplasm. The protein localises to the golgi apparatus membrane. Its subcellular location is the cytoplasmic vesicle. It localises to the COPI-coated vesicle membrane. The protein resides in the secreted. Its function is as follows. The coatomer is a cytosolic protein complex that binds to dilysine motifs and reversibly associates with Golgi non-clathrin-coated vesicles, which further mediate biosynthetic protein transport from the ER, via the Golgi up to the trans Golgi network. Coatomer complex is required for budding from Golgi membranes, and is essential for the retrograde Golgi-to-ER transport of dilysine-tagged proteins. In mammals, the coatomer can only be recruited by membranes associated to ADP-ribosylation factors (ARFs), which are small GTP-binding proteins; the complex also influences the Golgi structural integrity, as well as the processing, activity, and endocytic recycling of LDL receptors. Functionally, xenin stimulates exocrine pancreatic secretion. It inhibits pentagastrin-stimulated secretion of acid, to induce exocrine pancreatic secretion and to affect small and large intestinal motility. In the gut, xenin interacts with the neurotensin receptor. This chain is Coatomer subunit alpha (COPA), found in Bos taurus (Bovine).